The primary structure comprises 426 residues: Glutamate-1-semialdehyde 2,1-aminomutase 2 (426 aa).

N6-(pyridoxal phosphate)lysine is present on lysine 265.

Belongs to the class-III pyridoxal-phosphate-dependent aminotransferase family. HemL subfamily. As to quaternary structure, homodimer. The cofactor is pyridoxal 5'-phosphate.

It localises to the cytoplasm. The enzyme catalyses (S)-4-amino-5-oxopentanoate = 5-aminolevulinate. The protein operates within porphyrin-containing compound metabolism; protoporphyrin-IX biosynthesis; 5-aminolevulinate from L-glutamyl-tRNA(Glu): step 2/2. The protein is Glutamate-1-semialdehyde 2,1-aminomutase 2 of Lachnoclostridium phytofermentans (strain ATCC 700394 / DSM 18823 / ISDg) (Clostridium phytofermentans).